We begin with the raw amino-acid sequence, 955 residues long: UPF0182 protein syc2310_c (955 aa).

A run of 9 helical transmembrane segments spans residues 12 to 32, 45 to 65, 85 to 105, 141 to 161, 163 to 183, 224 to 244, 263 to 283, 306 to 326, and 343 to 363; these read IAAI…TLWF, LAVQ…LIGG, LQLG…LALT, GSWP…LFLW, PWPL…LLTS, FDLW…YYLA, HLVR…WLAQ, LPLL…LFWQ, and AAIA…QLVV.

The protein belongs to the UPF0182 family.

It is found in the cell membrane. In Synechococcus sp. (strain ATCC 27144 / PCC 6301 / SAUG 1402/1) (Anacystis nidulans), this protein is UPF0182 protein syc2310_c.